The following is a 568-amino-acid chain: MNIFKQISSLIFSKLNELKQRGVISTSAANFIIEPPSNRVHGDIYTNVAMVLAKHEKKNPIEIAEVLAKEFELFDEVAKVEIAGSGFINMHLKIEVWHGILKQINELKTEFGTLDIGNNQAINVEFVSANPTGPLHIGHARGAVFGDVLANLLKKVGYKVTKEYYINDAGAQIDTLIRSVYLRYKEALGEKISIEKGLYPGEYLKPIGTGLAKKYGAELLEKQDNQVIRDYTLSSILEIIKEDMNLLGVNHDVFTSEYELQKSGKIEESIKILSDKGLVYEGYLEKPKGKESENWTSRKEMLFRSTKFGDDVDRALKKEDGSWTYFASDIAYHFDKISRGFNNMIVELGSDHGGYVKRLKAVVSALSDDQAKIEVKLHNIVNFFENGKPVKMSKRSGNFLTARDVVEEVGRDITRFIMLTRKNDMVLDFDFAKVKEQSKDNPIFYVQYAHARAHSLMRNAPKELPTADPSLLRTGGELFLIKTLAKWPDVVEIAARLCEPHRITFYLLEVAEAFHVLWGYGKSDLNMRFILEDNLNLTAARMFLVQALAHVIASGLSIFNIEPLEEMS.

Positions Ala129–His139 match the 'HIGH' region motif.

This sequence belongs to the class-I aminoacyl-tRNA synthetase family. Monomer.

Its subcellular location is the cytoplasm. The catalysed reaction is tRNA(Arg) + L-arginine + ATP = L-arginyl-tRNA(Arg) + AMP + diphosphate. This Wolbachia pipientis wMel protein is Arginine--tRNA ligase.